Here is a 174-residue protein sequence, read N- to C-terminus: Chorismate pyruvate-lyase (174 aa).

Substrate-binding residues include Met-36, Arg-78, Leu-116, and Glu-157.

This sequence belongs to the UbiC family. Monomer.

The protein resides in the cytoplasm. The catalysed reaction is chorismate = 4-hydroxybenzoate + pyruvate. The protein operates within cofactor biosynthesis; ubiquinone biosynthesis. Functionally, removes the pyruvyl group from chorismate, with concomitant aromatization of the ring, to provide 4-hydroxybenzoate (4HB) for the ubiquinone pathway. This is Chorismate pyruvate-lyase from Yersinia pestis bv. Antiqua (strain Angola).